The sequence spans 664 residues: MSELLLELFSEEMPAFMQKNAEEGYLNIFTKIFEENEIFAKVQVFVGPRRITLHATHLPKITLPKEEEIKGPSIEAPEAAINGFCKAHNVSKLELPTKLISNQLYYFFVKKTEEREIKEILPEIIIEAINKYSWAKSMFWGDYKIKWIRPLRNILCIFDGEILPMQFGHLTANNITYGHRLTDNKKLEVTDFEDYRNKLLENHVILERAKREAIIKTGLLELANSHELIIKEDNRLVEEVVGLSEFPVVLLGKIPQKFLELPKEVLISSMRTHQKYFCLFDKTGNFTPYFLFVSNGRFTNAELVIQGNEKVLSARLSDALYFCKQDIAKTLESRLGQLEAATFHAKLGNLREKIERITDICNYIAPNNKDLITAARLCKSDLVSEMVGEFPDLQGIMGYYYAKHEGLNAEIAAAIRDHYKPQGLSDNLPSGNAALLALADKLDSLVGLMIAGETPTGSGDPYALRRQALGIIRIILENKLELNFNDLINFSINLYKDSSDENKNLIISFFKERAKFYFKNDYDIALINAVLDLNLVDTNFKLDALKEFLIEDAGKQLLNAYKRASNIIGDQKITGLVDASLFSTQPEKELFEVIQKISPQIIDSIADKDYKKALNLLSSLLTPITSFFDNVLVNDSDPKIAQNRLSLLQNICELFDKVAKFNRL.

Belongs to the class-II aminoacyl-tRNA synthetase family. As to quaternary structure, tetramer of two alpha and two beta subunits.

It localises to the cytoplasm. The enzyme catalyses tRNA(Gly) + glycine + ATP = glycyl-tRNA(Gly) + AMP + diphosphate. This is Glycine--tRNA ligase beta subunit from Rickettsia africae (strain ESF-5).